We begin with the raw amino-acid sequence, 185 residues long: Adenine phosphoribosyltransferase (185 aa).

Belongs to the purine/pyrimidine phosphoribosyltransferase family. As to quaternary structure, homodimer.

It localises to the cytoplasm. The catalysed reaction is AMP + diphosphate = 5-phospho-alpha-D-ribose 1-diphosphate + adenine. It participates in purine metabolism; AMP biosynthesis via salvage pathway; AMP from adenine: step 1/1. Catalyzes a salvage reaction resulting in the formation of AMP, that is energically less costly than de novo synthesis. The polypeptide is Adenine phosphoribosyltransferase (Aliarcobacter butzleri (strain RM4018) (Arcobacter butzleri)).